We begin with the raw amino-acid sequence, 273 residues long: Putative phosphoenolpyruvate synthase regulatory protein (273 aa).

ADP is bound at residue 154 to 161 (GVSRSGKT).

This sequence belongs to the pyruvate, phosphate/water dikinase regulatory protein family. PSRP subfamily.

It carries out the reaction [pyruvate, water dikinase] + ADP = [pyruvate, water dikinase]-phosphate + AMP + H(+). It catalyses the reaction [pyruvate, water dikinase]-phosphate + phosphate + H(+) = [pyruvate, water dikinase] + diphosphate. Bifunctional serine/threonine kinase and phosphorylase involved in the regulation of the phosphoenolpyruvate synthase (PEPS) by catalyzing its phosphorylation/dephosphorylation. The protein is Putative phosphoenolpyruvate synthase regulatory protein of Neisseria meningitidis serogroup C (strain 053442).